Reading from the N-terminus, the 29-residue chain is ARYAILFAGSNVVYNAXXQADIYTIYTFL.

This chain is 28 kDa protein, found in Tritrichomonas foetus (Trichomonas foetus).